The primary structure comprises 187 residues: Biogenesis of lysosome-related organelles complex 1 subunit 5 (187 aa).

The tract at residues 1–27 (MSGGGTETPVACEAAQGGGGKKRDSLG) is disordered. The residue at position 2 (serine 2) is an N-acetylserine.

This sequence belongs to the BLOC1S5 family. Octamer composed of one copy each BLOC1S1, BLOC1S2, BLOC1S3, BLOC1S4, BLOC1S5, BLOC1S6, DTNBP1/BLOC1S7 and SNAPIN/BLOC1S8. The BLOC-1 complex associates with the AP-3 protein complex and membrane protein cargos. Interacts with BLOC1S4, BLOC1S6, DTNBP1/BLOC1S7 and PI4K2A. Component of the biogenesis of lysosome-related organelles complex 1 (BLOC-1) composed of BLOC1S1, BLOC1S2, BLOC1S3, BLOC1S4, BLOC1S5, BLOC1S6, DTNBP1/BLOC1S7 and SNAPIN/BLOC1S8.

Component of the BLOC-1 complex, a complex that is required for normal biogenesis of lysosome-related organelles (LRO), such as platelet dense granules and melanosomes. In concert with the AP-3 complex, the BLOC-1 complex is required to target membrane protein cargos into vesicles assembled at cell bodies for delivery into neurites and nerve terminals. The BLOC-1 complex, in association with SNARE proteins, is also proposed to be involved in neurite extension. Plays a role in intracellular vesicle trafficking. The polypeptide is Biogenesis of lysosome-related organelles complex 1 subunit 5 (Bloc1s5) (Rattus norvegicus (Rat)).